The following is a 92-amino-acid chain: Large ribosomal subunit protein uL23c (92 aa).

Belongs to the universal ribosomal protein uL23 family. Part of the 50S ribosomal subunit.

Its subcellular location is the plastid. The protein localises to the chloroplast. In terms of biological role, binds to 23S rRNA. The protein is Large ribosomal subunit protein uL23c (rpl23) of Chara vulgaris (Common stonewort).